A 324-amino-acid polypeptide reads, in one-letter code: Beta-ketoacyl-[acyl-carrier-protein] synthase III (324 aa).

Active-site residues include Cys112 and His249. The segment at 250–254 (QANIR) is ACP-binding. Asn279 is an active-site residue.

This sequence belongs to the thiolase-like superfamily. FabH family. Homodimer.

Its subcellular location is the cytoplasm. It carries out the reaction malonyl-[ACP] + acetyl-CoA + H(+) = 3-oxobutanoyl-[ACP] + CO2 + CoA. Its pathway is lipid metabolism; fatty acid biosynthesis. Functionally, catalyzes the condensation reaction of fatty acid synthesis by the addition to an acyl acceptor of two carbons from malonyl-ACP. Catalyzes the first condensation reaction which initiates fatty acid synthesis and may therefore play a role in governing the total rate of fatty acid production. Possesses both acetoacetyl-ACP synthase and acetyl transacylase activities. Its substrate specificity determines the biosynthesis of branched-chain and/or straight-chain of fatty acids. In Streptococcus sanguinis (strain SK36), this protein is Beta-ketoacyl-[acyl-carrier-protein] synthase III.